Consider the following 695-residue polypeptide: Testis-specific Y-encoded-like protein 2 (695 aa).

A disordered region spans residues 1–56 (MDRPDEGPPAKTRRLSSSESPQRDPPPPPPPPPLLRLPLPPPQQRPRLQEETEAAQ). Residue Lys11 forms a Glycyl lysine isopeptide (Lys-Gly) (interchain with G-Cter in SUMO2) linkage. Ser18 and Ser20 each carry phosphoserine. Residues 23–44 (RDPPPPPPPPPLLRLPLPPPQQ) are compositionally biased toward pro residues. Residues Lys163 and Lys165 each participate in a glycyl lysine isopeptide (Lys-Gly) (interchain with G-Cter in SUMO2) cross-link. The segment at 175–207 (EDEDEQESMRSSRRRRRRRRRKQRKVKRESRQR) is disordered. Positions 185 to 202 (SSRRRRRRRRRKQRKVKR) are enriched in basic residues. Thr340 carries the post-translational modification Phosphothreonine. 2 disordered regions span residues 471–603 (DINE…RDIE) and 632–695 (VEEE…GKTG). A compositionally biased stretch (basic and acidic residues) spans 481–491 (SPDHDEVRNET). A compositionally biased stretch (acidic residues) spans 496 to 518 (ESADDNETTDNNESADDNNENPE). Residues 519 to 535 (DNNKNADDNKENPDNNK) are compositionally biased toward basic and acidic residues. Low complexity predominate over residues 539–557 (GNNFFNGGFWGSHGNNQDS). Composition is skewed to acidic residues over residues 558–601 (SDSD…DDRD) and 632–677 (VEEE…DLED). Ser670 and Ser673 each carry phosphoserine.

This sequence belongs to the nucleosome assembly protein (NAP) family. As to quaternary structure, interacts with histones. Interacts with CASK. Part of a complex containing CASK, TBR1 and TSPYL2. Post-translationally, phosphorylation at Ser-20 and/or Thr-340 impairs function on cell proliferation. Ubiquitously expressed, with highest levels in testis, adrenal gland, cerebral cortex, ovary, skeletal muscle and spleen. Present in testis, adrenal gland, cerebral cortex and ovary (at protein level).

Its subcellular location is the nucleus. It localises to the cytoplasm. Functionally, part of the CASK/TBR1/TSPYL2 transcriptional complex which modulates gene expression in response to neuronal synaptic activity, probably by facilitating nucleosome assembly. May inhibit cell proliferation by inducing p53-dependent CDKN1A expression. The sequence is that of Testis-specific Y-encoded-like protein 2 (TSPYL2) from Macaca fascicularis (Crab-eating macaque).